We begin with the raw amino-acid sequence, 314 residues long: MTEQRPSQQAKQPRRDVHGVLLLDKPIGWSSNDALIRAKRLLWAKKAGHTGTLDPLATGLLPLCFGEATKFSQDLLEADKTYEAVVRLGIRTSTADAEGEVLSERPVAVTPEQLRAAIGRFVGEIDQVPPMHSALKKDGKPLYEYARAGQTVERAARRVTIRAIDVLATDLDAAAPTVTLRVCCSKGTYIRTLGEDLGEALGCGAHLVALRRTQVGSLTLDGAVTLEALEAASEDQRAALLAPVDALLQTLPRVELGAEDSRRFLHGQRLPLQLSLPSAEQVRVYGARGEAGASLLGVAAWQGGVLRPERLVHL.

D54 serves as the catalytic Nucleophile.

This sequence belongs to the pseudouridine synthase TruB family. Type 1 subfamily.

The catalysed reaction is uridine(55) in tRNA = pseudouridine(55) in tRNA. Its function is as follows. Responsible for synthesis of pseudouridine from uracil-55 in the psi GC loop of transfer RNAs. The sequence is that of tRNA pseudouridine synthase B from Ralstonia nicotianae (strain ATCC BAA-1114 / GMI1000) (Ralstonia solanacearum).